The primary structure comprises 143 residues: UPF0201 protein Tneu_0685 (143 aa).

The protein belongs to the UPF0201 family.

The chain is UPF0201 protein Tneu_0685 from Pyrobaculum neutrophilum (strain DSM 2338 / JCM 9278 / NBRC 100436 / V24Sta) (Thermoproteus neutrophilus).